The chain runs to 654 residues: DNA ligase (654 aa).

NAD(+) is bound by residues 32-36 (DAVYD) and 81-82 (SL). Lysine 112 acts as the N6-AMP-lysine intermediate in catalysis. Arginine 133, glutamate 167, and lysine 306 together coordinate NAD(+). Zn(2+) is bound by residues cysteine 400, cysteine 403, cysteine 416, and cysteine 421. The BRCT domain maps to 577–654 (ESSSIFSHKT…EEELLKYLKE (78 aa)).

Belongs to the NAD-dependent DNA ligase family. LigA subfamily. Requires Mg(2+) as cofactor. The cofactor is Mn(2+).

The enzyme catalyses NAD(+) + (deoxyribonucleotide)n-3'-hydroxyl + 5'-phospho-(deoxyribonucleotide)m = (deoxyribonucleotide)n+m + AMP + beta-nicotinamide D-nucleotide.. DNA ligase that catalyzes the formation of phosphodiester linkages between 5'-phosphoryl and 3'-hydroxyl groups in double-stranded DNA using NAD as a coenzyme and as the energy source for the reaction. It is essential for DNA replication and repair of damaged DNA. The sequence is that of DNA ligase from Helicobacter acinonychis (strain Sheeba).